A 160-amino-acid chain; its full sequence is Major strawberry allergen Fra a 1-A (160 aa).

The protein belongs to the BetVI family. As to quaternary structure, monomer.

Its function is as follows. May be involved in ripening of fruits. The chain is Major strawberry allergen Fra a 1-A from Fragaria ananassa (Strawberry).